The sequence spans 228 residues: UPF0758 protein RALTA_A2508 (228 aa).

An MPN domain is found at 102-224; it reads GFDSPDSVRS…IRSLAESCER (123 aa). Residues histidine 173, histidine 175, and aspartate 186 each contribute to the Zn(2+) site. Residues 173 to 186 carry the JAMM motif motif; that stretch reads HNHPRGTTAPSQSD.

The protein belongs to the UPF0758 family.

In Cupriavidus taiwanensis (strain DSM 17343 / BCRC 17206 / CCUG 44338 / CIP 107171 / LMG 19424 / R1) (Ralstonia taiwanensis (strain LMG 19424)), this protein is UPF0758 protein RALTA_A2508.